The following is a 156-amino-acid chain: Cytochrome c-type biogenesis protein CcmE 2 (156 aa).

The Cytoplasmic segment spans residues 1–8; that stretch reads MNPQRRRR. The helical; Signal-anchor for type II membrane protein transmembrane segment at 9–29 threads the bilayer; it reads LWWVLALLLAGGLATTLVSMA. Topologically, residues 30–156 are periplasmic; sequence LQRNVAYLYT…AAANQGGALR (127 aa). Heme contacts are provided by H123 and Y127. Residues 135 to 156 form a disordered region; sequence KMGSAHRKHDVPAAANQGGALR.

Belongs to the CcmE/CycJ family.

The protein resides in the cell inner membrane. Functionally, heme chaperone required for the biogenesis of c-type cytochromes. Transiently binds heme delivered by CcmC and transfers the heme to apo-cytochromes in a process facilitated by CcmF and CcmH. This chain is Cytochrome c-type biogenesis protein CcmE 2, found in Xanthomonas oryzae pv. oryzae (strain MAFF 311018).